The chain runs to 501 residues: Aspartyl/glutamyl-tRNA(Asn/Gln) amidotransferase subunit B (501 aa).

The disordered stretch occupies residues 276-299 (HYQEADGSTSKGRPKETAEDYRYF). Positions 288–299 (RPKETAEDYRYF) are enriched in basic and acidic residues.

This sequence belongs to the GatB/GatE family. GatB subfamily. As to quaternary structure, heterotrimer of A, B and C subunits.

The catalysed reaction is L-glutamyl-tRNA(Gln) + L-glutamine + ATP + H2O = L-glutaminyl-tRNA(Gln) + L-glutamate + ADP + phosphate + H(+). The enzyme catalyses L-aspartyl-tRNA(Asn) + L-glutamine + ATP + H2O = L-asparaginyl-tRNA(Asn) + L-glutamate + ADP + phosphate + 2 H(+). Functionally, allows the formation of correctly charged Asn-tRNA(Asn) or Gln-tRNA(Gln) through the transamidation of misacylated Asp-tRNA(Asn) or Glu-tRNA(Gln) in organisms which lack either or both of asparaginyl-tRNA or glutaminyl-tRNA synthetases. The reaction takes place in the presence of glutamine and ATP through an activated phospho-Asp-tRNA(Asn) or phospho-Glu-tRNA(Gln). The polypeptide is Aspartyl/glutamyl-tRNA(Asn/Gln) amidotransferase subunit B (Corynebacterium glutamicum (strain R)).